A 764-amino-acid polypeptide reads, in one-letter code: Phenylalanine--tRNA ligase beta subunit (764 aa).

Residues 38–148 (CIAPKNVVVG…GELVLGKELH (111 aa)) form the tRNA-binding domain. In terms of domain architecture, B5 spans 375 to 455 (LKDCALTFQL…RFVGIDNLVS (81 aa)). Aspartate 433, aspartate 439, glutamate 442, and glutamate 443 together coordinate Mg(2+). The FDX-ACB domain occupies 673 to 763 (SIYPSSVRDL…LEKEFNARLK (91 aa)).

It belongs to the phenylalanyl-tRNA synthetase beta subunit family. Type 1 subfamily. Tetramer of two alpha and two beta subunits. It depends on Mg(2+) as a cofactor.

The protein localises to the cytoplasm. It carries out the reaction tRNA(Phe) + L-phenylalanine + ATP = L-phenylalanyl-tRNA(Phe) + AMP + diphosphate + H(+). The protein is Phenylalanine--tRNA ligase beta subunit (pheT) of Helicobacter pylori (strain J99 / ATCC 700824) (Campylobacter pylori J99).